Consider the following 55-residue polypeptide: Large ribosomal subunit protein bL33 (55 aa).

Belongs to the bacterial ribosomal protein bL33 family.

The chain is Large ribosomal subunit protein bL33 from Burkholderia ambifaria (strain MC40-6).